A 465-amino-acid chain; its full sequence is UDP-N-acetylmuramoylalanine--D-glutamate ligase (465 aa).

Residue 112 to 118 (GTDGKTT) coordinates ATP.

The protein belongs to the MurCDEF family.

The protein resides in the cytoplasm. The catalysed reaction is UDP-N-acetyl-alpha-D-muramoyl-L-alanine + D-glutamate + ATP = UDP-N-acetyl-alpha-D-muramoyl-L-alanyl-D-glutamate + ADP + phosphate + H(+). It functions in the pathway cell wall biogenesis; peptidoglycan biosynthesis. Its function is as follows. Cell wall formation. Catalyzes the addition of glutamate to the nucleotide precursor UDP-N-acetylmuramoyl-L-alanine (UMA). The protein is UDP-N-acetylmuramoylalanine--D-glutamate ligase of Chlorobium limicola (strain DSM 245 / NBRC 103803 / 6330).